Reading from the N-terminus, the 216-residue chain is Ras-related protein YPTC6 (216 aa).

19–26 (GDSGVGKS) lines the GTP pocket. The Effector region signature appears at 41–49 (SKSTIGVEF). GTP contacts are provided by residues 67–71 (DTAGQ) and 125–128 (NKSD). 2 S-geranylgeranyl cysteine lipidation sites follow: cysteine 214 and cysteine 215.

This sequence belongs to the small GTPase superfamily. Rab family.

Its subcellular location is the cell membrane. In Chlamydomonas reinhardtii (Chlamydomonas smithii), this protein is Ras-related protein YPTC6 (YPTC6).